Reading from the N-terminus, the 588-residue chain is Calcium/calmodulin-dependent protein kinase kinase 2 (588 aa).

Positions 1-11 are enriched in polar residues; that stretch reads MSSCVSSQPTS. Disordered regions lie at residues 1–34 and 64–147; these read MSSC…KPCE and DLNL…PTVE. Serine 2 is modified (N-acetylserine). 5 positions are modified to phosphoserine: serine 99, serine 114, serine 129, serine 133, and serine 137. A compositionally biased stretch (polar residues) spans 101–116; it reads QEPSQGGPASSSNSLD. Low complexity predominate over residues 124-139; it reads PSLSYSPASSPQSSPR. Positions 165-446 constitute a Protein kinase domain; that stretch reads YTLKDEIGKG…VPEIKLHPWV (282 aa). ATP-binding positions include 171-179 and lysine 194; that span reads IGKGSYGVV. An RP domain region spans residues 204–226; that stretch reads QAGFPRRPPPRGARPAPGGCIQP. The segment at 205–225 is disordered; it reads AGFPRRPPPRGARPAPGGCIQ. Catalysis depends on aspartate 312, which acts as the Proton acceptor. The interval 472–477 is autoinhibitory domain; the sequence is ENSVKH. Residues 475–500 are calmodulin-binding; it reads VKHIPSLATVILVKTMIRKRSFGNPF. Serine 495, serine 511, threonine 522, and serine 572 each carry phosphoserine. Residues 497–588 are disordered; the sequence is GNPFEGSRRE…LQPEEVMEPE (92 aa). Residues 521 to 536 are compositionally biased toward basic and acidic residues; sequence PTREWEPLSEPKEARQ. Positions 570–580 are enriched in pro residues; that stretch reads PGSPPRMPPLQ.

The protein belongs to the protein kinase superfamily. Ser/Thr protein kinase family. As to quaternary structure, interacts with calmodulin. In terms of processing, autophosphorylated and phosphorylated by PKA. Each isoform may show a different pattern of phosphorylation. In terms of tissue distribution, expressed in all tissues tested. A differential expression pattern compared to CAMKK1 is observed in the brain.

Its subcellular location is the nucleus. The protein resides in the cytoplasm. The protein localises to the cell projection. It localises to the neuron projection. The enzyme catalyses L-seryl-[protein] + ATP = O-phospho-L-seryl-[protein] + ADP + H(+). The catalysed reaction is L-threonyl-[protein] + ATP = O-phospho-L-threonyl-[protein] + ADP + H(+). With respect to regulation, activated by Ca(2+)/calmodulin. Binding of calmodulin may relieve intrasteric autoinhibition. Autophosphorylation does not alter activity or regulation by Ca(2+)/calmodulin. In part, activity is independent on Ca(2+)/calmodulin. Calcium/calmodulin-dependent protein kinase belonging to a proposed calcium-triggered signaling cascade involved in a number of cellular processes. Phosphorylates CAMK1, CAMK4 and CAMK1D. Efficiently phosphorylates 5'-AMP-activated protein kinase (AMPK) trimer, including that consisting of PRKAA1, PRKAB1 and PRKAG1. This phosphorylation is stimulated in response to Ca(2+) signals. May play a role in neurite growth. Isoform 2 may promote neurite elongation, while isoform 1 may promoter neurite branching. May be involved in hippocampal activation of CREB1. The polypeptide is Calcium/calmodulin-dependent protein kinase kinase 2 (Camkk2) (Mus musculus (Mouse)).